The following is a 196-amino-acid chain: Probable histone chaperone ASF1A (196 aa).

The span at 146 to 157 (VTKFPIDFHPEE) shows a compositional bias: basic and acidic residues. Residues 146 to 196 (VTKFPIDFHPEEEQTAATAAPPEQSDEQQPNVNGEAQVLPDQSVEPKPEES) are disordered.

This sequence belongs to the ASF1 family. In terms of assembly, interacts with histone H3 and histone H4. Component of the HIRA complex made of UBN1, UBN2, ASF1A, CABIN1 and HIRA. Interacts with HIRA. Expressed in leaves and flower buds.

It localises to the nucleus. It is found in the nucleolus. Its function is as follows. Histone chaperone that facilitates histone deposition and histone exchange and removal during nucleosome assembly and disassembly. While encoded by a region of the Arabidopsis thaliana genome that is homologous to the Brassica S-locus for self incompatibility, this protein may not play the same role in Arabidopsis thaliana. In Arabidopsis thaliana (Mouse-ear cress), this protein is Probable histone chaperone ASF1A (ASF1A).